A 419-amino-acid chain; its full sequence is Carboxypeptidase A1 (419 aa).

The first 16 residues, 1-16 (MRGLLVLSVLLGAVFG), serve as a signal peptide directing secretion. Residues 17-110 (KEDFVGHQVL…QEQMFAFRSR (94 aa)) constitute a propeptide, activation peptide. A Peptidase M14 domain is found at 121–414 (TYHTLEEIYD…LALLTIMEHT (294 aa)). Zn(2+) contacts are provided by histidine 179 and glutamate 182. Substrate-binding positions include 179–182 (HSRE), arginine 237, and 254–255 (NR). Cysteine 248 and cysteine 271 are disulfide-bonded. Zn(2+) is bound at residue histidine 306. Substrate contacts are provided by residues 307–308 (SY) and tyrosine 358. Residue glutamate 380 is the Proton donor/acceptor of the active site.

The protein belongs to the peptidase M14 family. In terms of assembly, monomer. May form a complex with proelastase 2. Zn(2+) is required as a cofactor.

The protein resides in the secreted. It carries out the reaction Release of a C-terminal amino acid, but little or no action with -Asp, -Glu, -Arg, -Lys or -Pro.. The enzyme catalyses leukotriene C4 + H2O = leukotriene F4 + glycine. Its activity is regulated as follows. Inhibited by interaction with the S.magnifica carboxypeptidase inhibitor SmCI. Carboxypeptidase that catalyzes the release of a C-terminal amino acid, but has little or no action with -Asp, -Glu, -Arg, -Lys or -Pro. Catalyzes the conversion of leukotriene C4 to leukotriene F4 via the hydrolysis of an amide bond. The protein is Carboxypeptidase A1 of Homo sapiens (Human).